The sequence spans 196 residues: Imidazoleglycerol-phosphate dehydratase (196 aa).

The protein belongs to the imidazoleglycerol-phosphate dehydratase family.

Its subcellular location is the cytoplasm. The catalysed reaction is D-erythro-1-(imidazol-4-yl)glycerol 3-phosphate = 3-(imidazol-4-yl)-2-oxopropyl phosphate + H2O. Its pathway is amino-acid biosynthesis; L-histidine biosynthesis; L-histidine from 5-phospho-alpha-D-ribose 1-diphosphate: step 6/9. The protein is Imidazoleglycerol-phosphate dehydratase of Akkermansia muciniphila (strain ATCC BAA-835 / DSM 22959 / JCM 33894 / BCRC 81048 / CCUG 64013 / CIP 107961 / Muc).